The chain runs to 147 residues: uncharacterized protein (147 aa).

The HTH LytTR-type domain occupies 44–147; that stretch reads LVGYIDKEIH…LKSIKERLSI (104 aa).

Its subcellular location is the cytoplasm. This is an uncharacterized protein from Staphylococcus aureus (strain Mu50 / ATCC 700699).